Here is a 154-residue protein sequence, read N- to C-terminus: 6,7-dimethyl-8-ribityllumazine synthase (154 aa).

5-amino-6-(D-ribitylamino)uracil-binding positions include Phe-22, 56 to 58, and 81 to 83; these read SFE and VLI. 86 to 87 is a binding site for (2S)-2-hydroxy-3-oxobutyl phosphate; it reads ET. His-89 functions as the Proton donor in the catalytic mechanism. Phe-114 provides a ligand contact to 5-amino-6-(D-ribitylamino)uracil. A (2S)-2-hydroxy-3-oxobutyl phosphate-binding site is contributed by Arg-128.

It belongs to the DMRL synthase family.

It catalyses the reaction (2S)-2-hydroxy-3-oxobutyl phosphate + 5-amino-6-(D-ribitylamino)uracil = 6,7-dimethyl-8-(1-D-ribityl)lumazine + phosphate + 2 H2O + H(+). It functions in the pathway cofactor biosynthesis; riboflavin biosynthesis; riboflavin from 2-hydroxy-3-oxobutyl phosphate and 5-amino-6-(D-ribitylamino)uracil: step 1/2. Functionally, catalyzes the formation of 6,7-dimethyl-8-ribityllumazine by condensation of 5-amino-6-(D-ribitylamino)uracil with 3,4-dihydroxy-2-butanone 4-phosphate. This is the penultimate step in the biosynthesis of riboflavin. The polypeptide is 6,7-dimethyl-8-ribityllumazine synthase (Chlamydia caviae (strain ATCC VR-813 / DSM 19441 / 03DC25 / GPIC) (Chlamydophila caviae)).